The sequence spans 267 residues: Serine acetyltransferase (267 aa).

It belongs to the transferase hexapeptide repeat family.

The protein localises to the cytoplasm. The catalysed reaction is L-serine + acetyl-CoA = O-acetyl-L-serine + CoA. The protein operates within amino-acid biosynthesis; L-cysteine biosynthesis; L-cysteine from L-serine: step 1/2. This chain is Serine acetyltransferase (cysE), found in Haemophilus influenzae (strain ATCC 51907 / DSM 11121 / KW20 / Rd).